A 375-amino-acid polypeptide reads, in one-letter code: Queuine tRNA-ribosyltransferase (375 aa).

Residue Asp-90 is the Proton acceptor of the active site. Substrate is bound by residues 90–94 (DSGGF), Asp-144, Gln-190, and Gly-217. The interval 248 to 254 (GIGTPHY) is RNA binding. Asp-267 functions as the Nucleophile in the catalytic mechanism. Residues 272–276 (TRIAR) are RNA binding; important for wobble base 34 recognition. Cys-305, Cys-307, Cys-310, and His-336 together coordinate Zn(2+).

Belongs to the queuine tRNA-ribosyltransferase family. Homodimer. Within each dimer, one monomer is responsible for RNA recognition and catalysis, while the other monomer binds to the replacement base PreQ1. Zn(2+) serves as cofactor.

The catalysed reaction is 7-aminomethyl-7-carbaguanine + guanosine(34) in tRNA = 7-aminomethyl-7-carbaguanosine(34) in tRNA + guanine. Its pathway is tRNA modification; tRNA-queuosine biosynthesis. In terms of biological role, catalyzes the base-exchange of a guanine (G) residue with the queuine precursor 7-aminomethyl-7-deazaguanine (PreQ1) at position 34 (anticodon wobble position) in tRNAs with GU(N) anticodons (tRNA-Asp, -Asn, -His and -Tyr). Catalysis occurs through a double-displacement mechanism. The nucleophile active site attacks the C1' of nucleotide 34 to detach the guanine base from the RNA, forming a covalent enzyme-RNA intermediate. The proton acceptor active site deprotonates the incoming PreQ1, allowing a nucleophilic attack on the C1' of the ribose to form the product. After dissociation, two additional enzymatic reactions on the tRNA convert PreQ1 to queuine (Q), resulting in the hypermodified nucleoside queuosine (7-(((4,5-cis-dihydroxy-2-cyclopenten-1-yl)amino)methyl)-7-deazaguanosine). The chain is Queuine tRNA-ribosyltransferase from Borrelia recurrentis (strain A1).